Consider the following 439-residue polypeptide: ATP-dependent RNA helicase RhlB (439 aa).

The Q motif motif lies at 9–37 (QKFADLPLHPEVKQALAENGFEFCTPIQA). Residues 40–219 (LPVLLQSKDI…YDHMNDPVKV (180 aa)) enclose the Helicase ATP-binding domain. 53 to 60 (AQTGTGKT) contributes to the ATP binding site. Residues 165-168 (DEAD) carry the DEAD box motif. The 148-residue stretch at 243–390 (KMRLLLTLIE…VSNYDSSALL (148 aa)) folds into the Helicase C-terminal domain. The segment at 398–439 (KIPRKHPAGTRNLRERAGAGRPQGAHRSGGRPPRHDRTRRHS) is disordered. A compositionally biased stretch (basic residues) spans 425-439 (SGGRPPRHDRTRRHS).

This sequence belongs to the DEAD box helicase family. RhlB subfamily. As to quaternary structure, component of the RNA degradosome, which is a multiprotein complex involved in RNA processing and mRNA degradation.

It is found in the cytoplasm. It carries out the reaction ATP + H2O = ADP + phosphate + H(+). Functionally, DEAD-box RNA helicase involved in RNA degradation. Has RNA-dependent ATPase activity and unwinds double-stranded RNA. This is ATP-dependent RNA helicase RhlB from Shewanella putrefaciens (strain CN-32 / ATCC BAA-453).